The primary structure comprises 418 residues: Transcription termination factor Rho (418 aa).

The Rho RNA-BD domain maps to Ser-48 to Ala-123. ATP contacts are provided by residues Gly-169–Ala-174, Lys-181–Val-186, and Arg-212.

It belongs to the Rho family. Homohexamer. The homohexamer assembles into an open ring structure.

Its function is as follows. Facilitates transcription termination by a mechanism that involves Rho binding to the nascent RNA, activation of Rho's RNA-dependent ATPase activity, and release of the mRNA from the DNA template. The sequence is that of Transcription termination factor Rho from Chromobacterium violaceum (strain ATCC 12472 / DSM 30191 / JCM 1249 / CCUG 213 / NBRC 12614 / NCIMB 9131 / NCTC 9757 / MK).